A 101-amino-acid polypeptide reads, in one-letter code: Chaperone modulatory protein CbpM (101 aa).

Belongs to the CbpM family.

Functionally, interacts with CbpA and inhibits both the DnaJ-like co-chaperone activity and the DNA binding activity of CbpA. Together with CbpA, modulates the activity of the DnaK chaperone system. Does not inhibit the co-chaperone activity of DnaJ. The protein is Chaperone modulatory protein CbpM of Pseudomonas putida (strain W619).